The chain runs to 84 residues: Defensin-like protein 140 (84 aa).

An N-terminal signal peptide occupies residues 1-28 (MSKSLQLIVTVLCIFTILVLGEICLAKG). Cystine bridges form between C37–C81, C46–C65, C51–C75, and C55–C77.

The protein belongs to the DEFL family.

The protein localises to the secreted. This chain is Defensin-like protein 140 (LCR15), found in Arabidopsis thaliana (Mouse-ear cress).